The sequence spans 304 residues: Nod factor export ATP-binding protein I (304 aa).

Residues 6–236 (IDFRNVEKRY…EIGCDVIEIY (231 aa)) enclose the ABC transporter domain. ATP is bound at residue 38–45 (GPNGAGKT).

The protein belongs to the ABC transporter superfamily. Lipooligosaccharide exporter (TC 3.A.1.102) family. The complex is composed of two ATP-binding proteins (NodI) and two transmembrane proteins (NodJ).

It localises to the cell inner membrane. Functionally, part of the ABC transporter complex NodIJ involved in the export of the nodulation factors (Nod factors), the bacterial signal molecules that induce symbiosis and subsequent nodulation induction. Nod factors are LCO (lipo-chitin oligosaccharide), a modified beta-1,4-linked N-acetylglucosamine oligosaccharide. This subunit is responsible for energy coupling to the transport system. The sequence is that of Nod factor export ATP-binding protein I from Burkholderia orbicola (strain AU 1054).